We begin with the raw amino-acid sequence, 362 residues long: Flagellar P-ring protein (362 aa).

The signal sequence occupies residues 1 to 15; that stretch reads MLAAALMSAAFGAHA.

The protein belongs to the FlgI family. In terms of assembly, the basal body constitutes a major portion of the flagellar organelle and consists of four rings (L,P,S, and M) mounted on a central rod.

It localises to the periplasm. The protein localises to the bacterial flagellum basal body. Assembles around the rod to form the L-ring and probably protects the motor/basal body from shearing forces during rotation. This chain is Flagellar P-ring protein, found in Pseudomonas fluorescens (strain Pf0-1).